The primary structure comprises 631 residues: MATWNRPHPRLPVAPEPVAEGESQQPLGRELSEANRFAYAALCGISLSQLFPEPEQSSFCSEFVTGLVKWLHLSETVLPTMMAFASGLGGKGDDIFAQTLLKDPILKDNPSAISQDLLSFSLKDGHYDARARVLVCHVISLLQVPMEELDILEEVFLESLKDAKEEESETAEESRKRKEKRRKWKRYLLIGLATVGGGTVIGVTGGLAAPLVAAGAATIIGSAGAAALGSVAGIAVMTSLFGAAGAGLTGYKMKKRVGAIEEFMFLPLTDGKQLHITIAITGWLGSGRYRTFNAPWMALARSQEQYCLAWEAKYLMELGNALETILSGLANMVAQEALKYTVLSGIVAALTLPASLLSVANVIDNPWGVCLHRSAEVGKHLAHILLSRQQGRRPVTLIGFSLGARVIYFCLQEMAQEQDCQGIIEDVVLLGAPVEGDPKYWEPFRNVVSGRIINGYCRGDWLLSFVYRTSSVQLRVAGLQPVLLQDRRMENVDLSSVVNGHLDYAKKMDVILKAVGIRTKPGWSEKGLPLAPGGLPQEEPLQPATVSTDETIHQDEQKQGPAPGDSLKSAIPSSASQAQVPAGLDQSTEDSLPAAAAPAEGHLVCSHGVGPNPLGCPDCTRETQESCAELD.

Positions 1–26 are disordered; sequence MATWNRPHPRLPVAPEPVAEGESQQP. Residues 153 to 183 adopt a coiled-coil conformation; the sequence is EEVFLESLKDAKEEESETAEESRKRKEKRRK. Helical transmembrane passes span 187–203, 204–220, 228–248, and 343–363; these read YLLI…VIGV, TGGL…ATII, LGSV…GAGL, and LSGI…ANVI. Positions 523–631 are disordered; sequence WSEKGLPLAP…ETQESCAELD (109 aa). The segment covering 571 to 590 has biased composition (polar residues); it reads IPSSASQAQVPAGLDQSTED.

Belongs to the TMCO4 family.

It is found in the membrane. The chain is Transmembrane and coiled-coil domain-containing protein 4 (Tmco4) from Rattus norvegicus (Rat).